A 333-amino-acid polypeptide reads, in one-letter code: Phosphoenolpyruvate transferase (333 aa).

A 7,8-didemethyl-8-hydroxy-5-deazariboflavin-binding site is contributed by Asp65.

The protein belongs to the CofD family. Homodimer. The cofactor is Mg(2+).

The enzyme catalyses enolpyruvoyl-2-diphospho-5'-guanosine + 7,8-didemethyl-8-hydroxy-5-deazariboflavin = dehydro coenzyme F420-0 + GMP + H(+). It participates in cofactor biosynthesis; coenzyme F420 biosynthesis. Functionally, catalyzes the transfer of the phosphoenolpyruvate moiety from enoylpyruvoyl-2-diphospho-5'-guanosine (EPPG) to 7,8-didemethyl-8-hydroxy-5-deazariboflavin (FO) with the formation of dehydro coenzyme F420-0 and GMP. The protein is Phosphoenolpyruvate transferase of Mycobacterium leprae (strain TN).